A 266-amino-acid polypeptide reads, in one-letter code: MLLLTRSPTAWHRLSQLKPRVLPGTLGGQALHLRSWLLSRQGPAETGGQGQPQGPGLRTRLLITGLFGAGLGGAWLALRAEKERLQQQKRTEALRQAAVGQGDFHLLDHRGRARCKADFRGQWVLMYFGFTHCPDICPDELEKLVQVVRQLEAEPGLPPVQPVFITVDPERDDVEAMARYVQDFHPRLLGLTGSTKQVAQASHSYRVYYNAGPKDEDQDYIVDHSIAIYLLNPDGLFTDYYGRSRSAEQISDSVRRHMAAFRSVLS.

The transit peptide at 1-41 directs the protein to the mitochondrion; that stretch reads MLLLTRSPTAWHRLSQLKPRVLPGTLGGQALHLRSWLLSRQ. Residues 42-60 are Mitochondrial matrix-facing; it reads GPAETGGQGQPQGPGLRTR. Residues 61–78 traverse the membrane as a helical segment; sequence LLITGLFGAGLGGAWLAL. At 79–266 the chain is on the mitochondrial intermembrane side; the sequence is RAEKERLQQQ…HMAAFRSVLS (188 aa). The region spanning 85-259 is the Thioredoxin domain; it reads LQQQKRTEAL…ISDSVRRHMA (175 aa). Cu cation contacts are provided by Cys133, Cys137, and His224. Cys133 and Cys137 are disulfide-bonded.

Belongs to the SCO1/2 family. In terms of assembly, homodimer. Interacts with COA6. Found in a complex with TMEM177, COX20, COA6, MT-CO2/COX2, COX18 and SCO1. Interacts with TMEM177 in a COX20-dependent manner. Interacts with COX20 in a MT-CO2/COX2- and COX18-dependent manner. Interacts with COX16. As to expression, ubiquitous.

It localises to the mitochondrion inner membrane. In terms of biological role, copper metallochaperone essential for the synthesis and maturation of cytochrome c oxidase subunit II (MT-CO2/COX2) by facilitating the incorporation of copper into the Cu(A) site of MT-CO2/COX2. Could also act as a thiol-disulfide oxidoreductase to regulate the redox state of the cysteines in SCO1 during maturation of MT-CO2/COX2. In Homo sapiens (Human), this protein is Protein SCO2 homolog, mitochondrial (SCO2).